The chain runs to 417 residues: MSLSNKLTLDKLDVKGKRVVMRVDFNVPMKNNQITNNQRIKAAVPSIKFCLDNGAKSVVLMSHLGRPDGVPMPDKYSLEPVAAELKSLLGKDVLFLKDCVGPEVENACANPAAGTVILLENLRFHVEEEGKGKDASGNKVKAEPAKIDAFRASLSKLGDVYVNDAFGTAHRAHSSMVGVNLPQKAGGFLMKKELNYFAKALESPERPFLAILGGAKVADKIQLINNMLDKVNEMIIGGGMAFTFLKVLNNMEIGTSLYDEEGAKIVKDLMSKAEKNGVKITLPVDFVTADKFDENAKTGQATVASGIPAGWMGLDCGTESSKKYAEAVGRAKQIVWNGPVGVFEWEAFARGTKSLMDEVVKATSRGCITIIGGGDTATCCAKWNTEDKVSHVSTGGGASLELLEGKVLPGVDALSNV.

Ser-2 bears the N-acetylserine mark. A phosphoserine mark is found at Ser-2 and Ser-4. Lys-6 bears the N6-succinyllysine mark. Lys-11 is subject to N6-acetyllysine. (2R)-3-phosphoglycerate-binding residues include Val-23, Asp-24, Phe-25, Asn-26, Gln-38, and Arg-39. Residues Gln-38–Ala-43 are mitochondrial targeting region exposed following cis-trans isomerization by PIN1 and recognized by the TOM complex for mitochondrial translocation of the protein. At Lys-48 the chain carries N6-acetyllysine; alternate. Position 48 is an N6-succinyllysine; alternate (Lys-48). 4 residues coordinate (2R)-3-phosphoglycerate: Ser-62, His-63, Gly-65, and Arg-66. Lys-75 bears the N6-acetyllysine mark. At Tyr-76 the chain carries Phosphotyrosine. Lys-86 and Lys-91 each carry N6-acetyllysine. The residue at position 97 (Lys-97) is an N6-acetyllysine; alternate. An N6-(2-hydroxyisobutyryl)lysine; alternate modification is found at Lys-97. Residues Leu-122 and Arg-123 each coordinate (2R)-3-phosphoglycerate. The residue at position 131 (Lys-131) is an N6-acetyllysine; alternate. Lys-131 carries the N6-malonyllysine; alternate modification. Lys-146 is modified (N6-acetyllysine). (2R)-3-phosphoglycerate is bound by residues His-170 and Arg-171. Position 191 is an N6-succinyllysine (Lys-191). Tyr-196 is modified (phosphotyrosine). Lys-199 carries the N6-acetyllysine modification. Ser-203 carries the post-translational modification Phosphoserine. Residue Gly-214 participates in ADP binding. Gly-214 contacts CDP. Residues Ala-215 and Lys-216 each contribute to the AMP site. Ala-215 serves as a coordination point for ATP. Residue Ala-215 participates in Mg(2+) binding. Lys-216 carries the N6-(2-hydroxyisobutyryl)lysine modification. Ala-218 and Asp-219 together coordinate Mg(2+). Asp-219 contributes to the CDP binding site. Lys-220 provides a ligand contact to AMP. An ATP-binding site is contributed by Lys-220. An N6-(2-hydroxyisobutyryl)lysine modification is found at Lys-220. Gly-238 provides a ligand contact to ADP. Residue Gly-238 participates in CDP binding. An AMP-binding site is contributed by Gly-239. Gly-239 serves as a coordination point for ATP. N6-acetyllysine is present on residues Lys-267 and Lys-291. An AMP-binding site is contributed by Gly-313. Residue Gly-313 coordinates ATP. Lys-323 bears the N6-(2-hydroxyisobutyryl)lysine mark. Residues Gly-338, Val-340, and Phe-343 each coordinate CDP. Position 343 (Phe-343) interacts with ADP. Position 344 (Glu-344) interacts with AMP. Glu-344 contributes to the ATP binding site. N6-acetyllysine is present on Lys-361. Positions 375 and 376 each coordinate ATP. Asp-375 contributes to the Mg(2+) binding site.

This sequence belongs to the phosphoglycerate kinase family. Monomer. Interacts with kinase MAPK1/ERK2; the interaction is direct, occurs under hypoxic conditions, and promotes its interaction with PIN1. Interacts with peptidyl-prolyl cis-trans isomerase PIN1; the interaction is direct, occurs under hypoxic conditions, and targets the protein to the mitochondrion by promoting interactions with the TOM complex. Interacts with mitochondrial circRNA mcPGK1 (via its 2nd stem-loop); the interaction is direct and targets the protein to the mitochondrion by promoting interactions with the TOM complex. Interacts with pyruvate dehydrogenase kinase PDK1; the interaction is direct, occurs under hypoxic conditions and leads to PDK1-mediated inhibition of pyruvate dehydrogenase complex activity. Mg(2+) serves as cofactor. Post-translationally, phosphorylated at Ser-203 by MAPK1/ERK2 under hypoxic conditions, which promotes its mitochondrial targeting. In terms of tissue distribution, testis, lung, brain, skeletal muscle, liver, intestine, and kidney (at protein level).

Its subcellular location is the cytoplasm. The protein localises to the cytosol. The protein resides in the mitochondrion matrix. It catalyses the reaction (2R)-3-phosphoglycerate + ATP = (2R)-3-phospho-glyceroyl phosphate + ADP. It carries out the reaction L-seryl-[protein] + ATP = O-phospho-L-seryl-[protein] + ADP + H(+). The protein operates within carbohydrate degradation; glycolysis; pyruvate from D-glyceraldehyde 3-phosphate: step 2/5. Functionally, catalyzes one of the two ATP producing reactions in the glycolytic pathway via the reversible conversion of 1,3-diphosphoglycerate to 3-phosphoglycerate. Both L- and D- forms of purine and pyrimidine nucleotides can be used as substrates, but the activity is much lower on pyrimidines. In addition to its role as a glycolytic enzyme, it seems that PGK-1 acts as a polymerase alpha cofactor protein (primer recognition protein). Acts as a protein kinase when localized to the mitochondrion where it phosphorylates pyruvate dehydrogenase kinase PDK1 to inhibit pyruvate dehydrogenase complex activity and suppress the formation of acetyl-coenzyme A from pyruvate, and consequently inhibit oxidative phosphorylation and promote glycolysis. May play a role in sperm motility. This chain is Phosphoglycerate kinase 1 (Pgk1), found in Mus musculus (Mouse).